The sequence spans 113 residues: MGFFSYLGLVLVGLASLTSLASLANLQDFSTDNPLEEELRCWCQYVKNCRFCWACQDGFCKNKVLKNMPSVQEHSYPMEHCMIHRQCKYVRDGPIFQVECMMQTCDAIHLLNA.

The signal sequence occupies residues 1–31 (MGFFSYLGLVLVGLASLTSLASLANLQDFST).

The protein belongs to the asfivirus MGF 110 family.

Functionally, plays a role in virus cell tropism, and may be required for efficient virus replication in macrophages. This chain is Protein MGF 110-2L, found in African swine fever virus (isolate Pig/Kenya/KEN-50/1950) (ASFV).